Here is a 328-residue protein sequence, read N- to C-terminus: GTPase Obg (328 aa).

The region spanning Tyr2–Val160 is the Obg domain. The region spanning Ala161–Lys326 is the OBG-type G domain. GTP contacts are provided by residues Gly167–Ser174, Phe192–Ile196, Asp213–Gly216, Asn280–Asp283, and Ser307–Tyr309. 2 residues coordinate Mg(2+): Ser174 and Thr194.

The protein belongs to the TRAFAC class OBG-HflX-like GTPase superfamily. OBG GTPase family. In terms of assembly, monomer. Requires Mg(2+) as cofactor.

The protein localises to the cytoplasm. Functionally, an essential GTPase which binds GTP, GDP and possibly (p)ppGpp with moderate affinity, with high nucleotide exchange rates and a fairly low GTP hydrolysis rate. Plays a role in control of the cell cycle, stress response, ribosome biogenesis and in those bacteria that undergo differentiation, in morphogenesis control. This Borreliella afzelii (strain PKo) (Borrelia afzelii) protein is GTPase Obg.